The chain runs to 2506 residues: Zinc finger protein 462 (2506 aa).

C2H2-type zinc fingers lie at residues 4–27 (LQCD…QDVH), 108–131 (FQCK…RKVH), and 162–185 (FSCQ…KMYH). A Glycyl lysine isopeptide (Lys-Gly) (interchain with G-Cter in SUMO1); alternate cross-link involves residue Lys-20. A Glycyl lysine isopeptide (Lys-Gly) (interchain with G-Cter in SUMO2); alternate cross-link involves residue Lys-20. Residues 215 to 241 (PCKELPAEVVERSILESMVKPLTKSRG) form an interaction with PBX1 region. Residues Lys-234 and Lys-271 each participate in a glycyl lysine isopeptide (Lys-Gly) (interchain with G-Cter in SUMO2) cross-link. The interval 280–299 (QEGTNLPDVPNKSAPSPTSN) is disordered. Ser-292 and Ser-309 each carry an O-linked (GlcNAc6P) serine glycan. Glycyl lysine isopeptide (Lys-Gly) (interchain with G-Cter in SUMO2) cross-links involve residues Lys-337, Lys-347, and Lys-349. The segment at 337–356 (KFSPMSYPQMKPKSPHNSGL) is disordered. Residues Ser-350 and Ser-354 each carry the phosphoserine modification. Residue Lys-428 forms a Glycyl lysine isopeptide (Lys-Gly) (interchain with G-Cter in SUMO2) linkage. C2H2-type zinc fingers lie at residues 439–462 (FQCP…ENIH) and 470–492 (YKCD…KQCH). Lys-484 participates in a covalent cross-link: Glycyl lysine isopeptide (Lys-Gly) (interchain with G-Cter in SUMO2). Positions 535-596 (DPLQQQQPPQ…QPQPPTQAAP (62 aa)) are disordered. Over residues 542–593 (PPQPPPPPPPPPPSQPQPLQQPQPPQLQPPHQVPPQPQTQPPPTQQPQPPTQ) the composition is skewed to pro residues. A C2H2-type 6 zinc finger spans residues 600–623 (YKCTMCNYSTTTLKGLRVHQQHKH). Residues Lys-631, Lys-657, and Lys-668 each participate in a glycyl lysine isopeptide (Lys-Gly) (interchain with G-Cter in SUMO2) cross-link. The tract at residues 636–661 (PSSLPLENETDSHPSSSNTVKKSQTS) is disordered. The segment covering 648-661 (HPSSSNTVKKSQTS) has biased composition (polar residues). Ser-688 is modified (phosphoserine). Residues Lys-706 and Asp-849 each participate in a glycyl lysine isopeptide (Lys-Gly) (interchain with G-Cter in SUMO2) cross-link. 3 consecutive C2H2-type zinc fingers follow at residues 843–866 (YYCK…QRMH), 886–908 (YRCL…YGEH), and 925–948 (YRCR…QRMH). Lys-986 participates in a covalent cross-link: Glycyl lysine isopeptide (Lys-Gly) (interchain with G-Cter in SUMO2). A C2H2-type 10 zinc finger spans residues 1030–1053 (YDCDVCSFASPNMHSVLVHYQKKH). Ser-1090 bears the Phosphoserine mark. Residue Lys-1135 forms a Glycyl lysine isopeptide (Lys-Gly) (interchain with G-Cter in SUMO2) linkage. Residues 1157–1186 (MRGVEGPQGSPRPPAPIQQLNRSSSERDGP) form a disordered region. Phosphoserine is present on Ser-1166. Residues Lys-1206, Lys-1214, Lys-1220, and Lys-1243 each participate in a glycyl lysine isopeptide (Lys-Gly) (interchain with G-Cter in SUMO2) cross-link. 2 C2H2-type zinc fingers span residues 1265–1288 (LKCR…KKDH) and 1470–1493 (YQCT…GKKH). A Glycyl lysine isopeptide (Lys-Gly) (interchain with G-Cter in SUMO2) cross-link involves residue Lys-1499. The C2H2-type 13 zinc finger occupies 1515-1538 (YKCRHCPYINTRIHGVLTHYQKRH). Glycyl lysine isopeptide (Lys-Gly) (interchain with G-Cter in SUMO2) cross-links involve residues Lys-1571 and Lys-1591. C2H2-type zinc fingers lie at residues 1577–1600 (YRCK…EKYH), 1660–1683 (FRCQ…RIKH), and 1697–1720 (FKCA…QKRH). Glycyl lysine isopeptide (Lys-Gly) (interchain with G-Cter in SUMO2) cross-links involve residues Lys-1698 and Lys-1780. The C2H2-type 17 zinc finger occupies 1892–1914 (YQCKHCDSKLQSTAELTSHLNIH). Lys-1946 is covalently cross-linked (Glycyl lysine isopeptide (Lys-Gly) (interchain with G-Cter in SUMO2)). The C2H2-type 18; degenerate zinc finger occupies 1968–1992 (YKCKFCVEVHPTLRAICNHLRKHVQ). Position 2004 is an N6-methyllysine (Lys-2004). C2H2-type zinc fingers lie at residues 2025-2048 (YSCQ…QTHH), 2054-2077 (FRCK…LKAH), and 2083-2106 (YKCS…LKVH). Lys-2104 participates in a covalent cross-link: Glycyl lysine isopeptide (Lys-Gly) (interchain with G-Cter in SUMO2). The tract at residues 2122–2152 (SSHSHHSSQKATPAEEVEDSNDSSYSEPPDV) is disordered. Polar residues predominate over residues 2143-2152 (DSSYSEPPDV). Residues Ser-2172 and Ser-2177 each carry the phosphoserine modification. 3 consecutive C2H2-type zinc fingers follow at residues 2191 to 2214 (LHCE…RDKH), 2220 to 2243 (FKCK…EAGH), and 2254 to 2276 (LRCP…IVLH). A Glycyl lysine isopeptide (Lys-Gly) (interchain with G-Cter in SUMO2) cross-link involves residue Lys-2293. 2 consecutive C2H2-type zinc fingers follow at residues 2300–2322 (FRCD…IEKH) and 2328–2351 (YKCQ…RDEH). A disordered region spans residues 2371-2396 (MKEKMESSSSDDEDKEEEMNSKAEDR). A C2H2-type 27 zinc finger spans residues 2414-2436 (FPCEFCGRAFSQGSEWERHVLRH). Glycyl lysine isopeptide (Lys-Gly) (interchain with G-Cter in SUMO2) cross-links involve residues Lys-2444 and Lys-2504.

In terms of assembly, interacts with PBX1; this interaction prevents PBX1-HOXA9 heterodimer from forming and binding to DNA. Post-translationally, O-GlcNAcylated with O-GlcNAc-6-phosphate.

It is found in the nucleus. Its function is as follows. Zinc finger nuclear factor involved in transcription by regulating chromatin structure and organization. Involved in the pluripotency and differentiation of embryonic stem cells by regulating SOX2, POU5F1/OCT4, and NANOG. By binding PBX1, prevents the heterodimerization of PBX1 and HOXA9 and their binding to DNA. Regulates neuronal development and neural cell differentiation. The protein is Zinc finger protein 462 of Homo sapiens (Human).